The chain runs to 69 residues: Conotoxin Lt5.7 (69 aa).

An N-terminal signal peptide occupies residues 1 to 19 (MLCLPVFIILLLLASPAAP). Residues 20–54 (KSLETRIQNDLIRAGLTDADLKTEKGFLSGLLNVA) constitute a propeptide that is removed on maturation.

This sequence belongs to the conotoxin T superfamily. Contains 2 disulfide bonds that can be either 'C1-C3, C2-C4' or 'C1-C4, C2-C3', since these disulfide connectivities have been observed for conotoxins with cysteine framework V (for examples, see AC P0DQQ7 and AC P81755). In terms of tissue distribution, expressed by the venom duct.

Its subcellular location is the secreted. This Conus litteratus (Lettered cone) protein is Conotoxin Lt5.7.